Reading from the N-terminus, the 311-residue chain is Probable manganese-dependent inorganic pyrophosphatase (311 aa).

The Mn(2+) site is built by H9, D13, D15, D77, H99, and D151.

It belongs to the PPase class C family. Mn(2+) is required as a cofactor.

The protein localises to the cytoplasm. The enzyme catalyses diphosphate + H2O = 2 phosphate + H(+). The protein is Probable manganese-dependent inorganic pyrophosphatase of Streptococcus equi subsp. zooepidemicus (strain H70).